The following is a 216-amino-acid chain: Pyridoxine/pyridoxamine 5'-phosphate oxidase (216 aa).

Substrate-binding positions include 9–12 (RLSY) and arginine 67. Residues 62-67 (RIVLLR), 77-78 (YT), lysine 84, and glutamine 106 each bind FMN. Residues tyrosine 124, arginine 128, and serine 132 each coordinate substrate. FMN-binding positions include 142-143 (QS) and tryptophan 188. 194-196 (RMH) is a binding site for substrate. Arginine 198 contacts FMN.

This sequence belongs to the pyridoxamine 5'-phosphate oxidase family. Homodimer. FMN is required as a cofactor.

The catalysed reaction is pyridoxamine 5'-phosphate + O2 + H2O = pyridoxal 5'-phosphate + H2O2 + NH4(+). The enzyme catalyses pyridoxine 5'-phosphate + O2 = pyridoxal 5'-phosphate + H2O2. Its pathway is cofactor metabolism; pyridoxal 5'-phosphate salvage; pyridoxal 5'-phosphate from pyridoxamine 5'-phosphate: step 1/1. It functions in the pathway cofactor metabolism; pyridoxal 5'-phosphate salvage; pyridoxal 5'-phosphate from pyridoxine 5'-phosphate: step 1/1. Catalyzes the oxidation of either pyridoxine 5'-phosphate (PNP) or pyridoxamine 5'-phosphate (PMP) into pyridoxal 5'-phosphate (PLP). The sequence is that of Pyridoxine/pyridoxamine 5'-phosphate oxidase from Psychrobacter cryohalolentis (strain ATCC BAA-1226 / DSM 17306 / VKM B-2378 / K5).